The following is a 233-amino-acid chain: tRNA (guanine-N(7)-)-methyltransferase (233 aa).

S-adenosyl-L-methionine is bound by residues E62, E87, D114, and D136. D136 is an active-site residue. Substrate contacts are provided by residues K140, D172, and 211 to 214 (TRYE).

This sequence belongs to the class I-like SAM-binding methyltransferase superfamily. TrmB family.

It catalyses the reaction guanosine(46) in tRNA + S-adenosyl-L-methionine = N(7)-methylguanosine(46) in tRNA + S-adenosyl-L-homocysteine. The protein operates within tRNA modification; N(7)-methylguanine-tRNA biosynthesis. In terms of biological role, catalyzes the formation of N(7)-methylguanine at position 46 (m7G46) in tRNA. The chain is tRNA (guanine-N(7)-)-methyltransferase from Erythrobacter litoralis (strain HTCC2594).